A 602-amino-acid polypeptide reads, in one-letter code: Elongation factor 4 (602 aa).

The tr-type G domain occupies 6–188 (DHIRNFSIVA…AIVTQLPAPK (183 aa)). GTP is bound by residues 18 to 23 (DHGKST) and 135 to 138 (NKID).

The protein belongs to the TRAFAC class translation factor GTPase superfamily. Classic translation factor GTPase family. LepA subfamily.

It localises to the cell inner membrane. It catalyses the reaction GTP + H2O = GDP + phosphate + H(+). Its function is as follows. Required for accurate and efficient protein synthesis under certain stress conditions. May act as a fidelity factor of the translation reaction, by catalyzing a one-codon backward translocation of tRNAs on improperly translocated ribosomes. Back-translocation proceeds from a post-translocation (POST) complex to a pre-translocation (PRE) complex, thus giving elongation factor G a second chance to translocate the tRNAs correctly. Binds to ribosomes in a GTP-dependent manner. The protein is Elongation factor 4 of Brucella anthropi (strain ATCC 49188 / DSM 6882 / CCUG 24695 / JCM 21032 / LMG 3331 / NBRC 15819 / NCTC 12168 / Alc 37) (Ochrobactrum anthropi).